Here is a 259-residue protein sequence, read N- to C-terminus: uncharacterized protein (259 aa).

The region spanning 1 to 159 (MIEQFFRPDS…TEIIIKDPYR (159 aa)) is the FAD-binding PCMH-type domain.

This is an uncharacterized protein from Escherichia coli O157:H7.